We begin with the raw amino-acid sequence, 350 residues long: Quinone oxidoreductase-like protein 2 (350 aa).

N6-acetyllysine is present on Lys36. The residue at position 201 (Lys201) is an N6-succinyllysine. Residues Lys302 and Lys328 each carry the N6-acetyllysine modification.

Belongs to the zinc-containing alcohol dehydrogenase family. Quinone oxidoreductase subfamily.

The protein is Quinone oxidoreductase-like protein 2 of Mus musculus (Mouse).